Here is a 226-residue protein sequence, read N- to C-terminus: LysM and putative peptidoglycan-binding domain-containing protein 1 (226 aa).

A phosphoserine mark is found at Ser23 and Ser33. Positions 40-84 (LEHQLEPGDTLAGLALKYGVTMEQIKRTNRLYTNDSIFLKKTLYI) constitute a LysM domain. The interval 95–156 (NGLDSEEEND…PSHDLSASDF (62 aa)) is disordered. Residues 98-107 (DSEEENDGEE) show a composition bias toward acidic residues. Ser99 carries the post-translational modification Phosphoserine. Polar residues predominate over residues 142-151 (QETSTPSHDL). A phosphoserine mark is found at Ser165, Ser180, Ser193, and Ser211. Residues 170–226 (AAAQKLRKGESGVPEEDTGLYPSSPRMQQRAVLGPVPLTRTSRTQTLRDQEDEIFKL) form a disordered region. A compositionally biased stretch (basic and acidic residues) spans 215 to 226 (TLRDQEDEIFKL).

The chain is LysM and putative peptidoglycan-binding domain-containing protein 1 (Lysmd1) from Mus musculus (Mouse).